The following is a 240-amino-acid chain: Uridylate kinase (240 aa).

Residue 15–18 coordinates ATP; that stretch reads KLSG. Residues 23–28 are involved in allosteric activation by GTP; that stretch reads GSEGFG. Position 57 (Gly-57) interacts with UMP. The ATP site is built by Gly-58 and Arg-62. Residues Asp-77 and 138-145 contribute to the UMP site; that span reads TGNPFFTT. 3 residues coordinate ATP: Thr-165, Tyr-171, and Asp-174.

The protein belongs to the UMP kinase family. In terms of assembly, homohexamer.

The protein resides in the cytoplasm. It carries out the reaction UMP + ATP = UDP + ADP. Its pathway is pyrimidine metabolism; CTP biosynthesis via de novo pathway; UDP from UMP (UMPK route): step 1/1. With respect to regulation, allosterically activated by GTP. Inhibited by UTP. Functionally, catalyzes the reversible phosphorylation of UMP to UDP. The chain is Uridylate kinase from Photobacterium profundum (strain SS9).